Reading from the N-terminus, the 552-residue chain is Protoheme IX farnesyltransferase, mitochondrial (552 aa).

Residues 118–185 (AADIPPSTST…PSGEIPPDAS (68 aa)) are disordered. A compositionally biased stretch (low complexity) spans 150-168 (EQAASASSNAPSEAAQTTP). The next 8 membrane-spanning stretches (helical) occupy residues 215-235 (LTMLVVLSAMVPYALYPVPDF), 245-267 (LSPLTLLFLTTGTTLCSAAANAL), 296-316 (AAVCFALFCATTGILALQFGV), 318-338 (PTVAFLGAANIVLYAGIYTPL), 346-366 (TWVGAVVGGIPPLMGWAAAAG), 387-407 (AGGWLFAALLFTWQFPHFMAL), 441-461 (VFVPLCVGLCAVGVTEWSFAV), and 487-507 (ARGLFWASVWHLPVVMVLALL).

The protein belongs to the UbiA prenyltransferase family.

The protein localises to the mitochondrion membrane. The enzyme catalyses heme b + (2E,6E)-farnesyl diphosphate + H2O = Fe(II)-heme o + diphosphate. Its function is as follows. Converts protoheme IX and farnesyl diphosphate to heme O. This is Protoheme IX farnesyltransferase, mitochondrial (COX10) from Pyricularia oryzae (strain 70-15 / ATCC MYA-4617 / FGSC 8958) (Rice blast fungus).